Reading from the N-terminus, the 296-residue chain is Nucleotide-binding protein MGAS2096_Spy0550 (296 aa).

13–20 (GMSGAGKT) is a binding site for ATP. 63–66 (DMRS) contributes to the GTP binding site.

This sequence belongs to the RapZ-like family.

Its function is as follows. Displays ATPase and GTPase activities. This chain is Nucleotide-binding protein MGAS2096_Spy0550, found in Streptococcus pyogenes serotype M12 (strain MGAS2096).